We begin with the raw amino-acid sequence, 185 residues long: uncharacterized protein (185 aa).

This is an uncharacterized protein from Haemophilus influenzae (strain ATCC 51907 / DSM 11121 / KW20 / Rd).